We begin with the raw amino-acid sequence, 435 residues long: Adenylosuccinate lyase (435 aa).

N(6)-(1,2-dicarboxyethyl)-AMP contacts are provided by residues 4-5 (RY), 73-75 (RHD), and 99-100 (TS). Histidine 147 functions as the Proton donor/acceptor in the catalytic mechanism. Glutamine 218 contributes to the N(6)-(1,2-dicarboxyethyl)-AMP binding site. Serine 268 serves as the catalytic Proton donor/acceptor. Residues serine 269, 274–276 (KKN), asparagine 282, and 313–317 (SAERV) contribute to the N(6)-(1,2-dicarboxyethyl)-AMP site.

It belongs to the lyase 1 family. Adenylosuccinate lyase subfamily. In terms of assembly, homotetramer. Residues from neighboring subunits contribute catalytic and substrate-binding residues to each active site.

It catalyses the reaction N(6)-(1,2-dicarboxyethyl)-AMP = fumarate + AMP. The catalysed reaction is (2S)-2-[5-amino-1-(5-phospho-beta-D-ribosyl)imidazole-4-carboxamido]succinate = 5-amino-1-(5-phospho-beta-D-ribosyl)imidazole-4-carboxamide + fumarate. The protein operates within purine metabolism; AMP biosynthesis via de novo pathway; AMP from IMP: step 2/2. It participates in purine metabolism; IMP biosynthesis via de novo pathway; 5-amino-1-(5-phospho-D-ribosyl)imidazole-4-carboxamide from 5-amino-1-(5-phospho-D-ribosyl)imidazole-4-carboxylate: step 2/2. In terms of biological role, catalyzes two reactions in de novo purine nucleotide biosynthesis. Catalyzes the breakdown of 5-aminoimidazole- (N-succinylocarboxamide) ribotide (SAICAR or 2-[5-amino-1-(5-phospho-beta-D-ribosyl)imidazole-4-carboxamido]succinate) to 5-aminoimidazole-4-carboxamide ribotide (AICAR or 5-amino-1-(5-phospho-beta-D-ribosyl)imidazole-4-carboxamide) and fumarate, and of adenylosuccinate (ADS or N(6)-(1,2-dicarboxyethyl)-AMP) to adenosine monophosphate (AMP) and fumarate. The sequence is that of Adenylosuccinate lyase (purB) from Deinococcus radiodurans (strain ATCC 13939 / DSM 20539 / JCM 16871 / CCUG 27074 / LMG 4051 / NBRC 15346 / NCIMB 9279 / VKM B-1422 / R1).